A 449-amino-acid chain; its full sequence is NADP-specific glutamate dehydrogenase (449 aa).

Residues Lys-92, Gln-113, and Lys-116 each coordinate substrate. Catalysis depends on Lys-128, which acts as the Proton donor. A substrate-binding site is contributed by Gly-167. Residues Thr-211 and Asn-242 each contribute to the NADP(+) site. Residue Ser-380 coordinates substrate.

Belongs to the Glu/Leu/Phe/Val dehydrogenases family. In terms of assembly, homohexamer.

The catalysed reaction is L-glutamate + NADP(+) + H2O = 2-oxoglutarate + NH4(+) + NADPH + H(+). Its function is as follows. Catalyzes the reversible oxidative deamination of glutamate to alpha-ketoglutarate and ammonia. The chain is NADP-specific glutamate dehydrogenase (gdhA) from Haemophilus influenzae (strain ATCC 51907 / DSM 11121 / KW20 / Rd).